Reading from the N-terminus, the 301-residue chain is NADH-cytochrome b5 reductase 3 (301 aa).

A lipid anchor (N-myristoyl glycine) is attached at Gly2. The 113-residue stretch at 40 to 152 (DIKYPLRLID…RGPSGLLVYQ (113 aa)) folds into the FAD-binding FR-type domain. N6-acetyllysine is present on Lys42. Phosphotyrosine is present on Tyr43. Residues Arg92, Pro93, Tyr94, Val109, Lys111, and Phe114 each coordinate FAD. Residue Lys120 is modified to N6-acetyllysine. FAD is bound by residues Lys126, Met127, Ser128, and Thr185.

It belongs to the flavoprotein pyridine nucleotide cytochrome reductase family. Component of a complex composed of cytochrome b5, NADH-cytochrome b5 reductase (CYB5R3) and MTARC2. Interacts with MTLN; the interaction is required to maintain cellular lipid composition and leads to stimulation of mitochondrial respiratory complex I activity. Requires FAD as cofactor. Expressed at late stages of erythroid maturation.

It is found in the endoplasmic reticulum membrane. The protein resides in the mitochondrion outer membrane. The protein localises to the cytoplasm. It catalyses the reaction 2 Fe(III)-[cytochrome b5] + NADH = 2 Fe(II)-[cytochrome b5] + NAD(+) + H(+). Its function is as follows. Catalyzes the reduction of two molecules of cytochrome b5 using NADH as the electron donor. The protein is NADH-cytochrome b5 reductase 3 of Homo sapiens (Human).